Here is a 679-residue protein sequence, read N- to C-terminus: Mitotic interactor and substrate of PLK1 (679 aa).

The residue at position 78 (S78) is a Phosphoserine; by CDK1; in vitro. Disordered stretches follow at residues 151-182 and 206-245; these read AVRK…TPLE and ANKG…GHVV. Residues 153 to 163 show a composition bias toward polar residues; that stretch reads RKSSTVATLQG. The residue at position 156 (S156) is a Phosphoserine. Phosphothreonine; by CDK1; in vitro occurs at positions 164 and 172. Phosphothreonine is present on T179. S214 bears the Phosphoserine; by CDK1; in vitro mark. A Phosphothreonine modification is found at T219. Position 224 is a phosphothreonine; by CDK1; in vitro (T224). The residue at position 284 (S284) is a Phosphoserine; by CDK1; in vitro. Position 287 is a phosphothreonine; by CDK1; in vitro (T287). A Phosphoserine modification is found at S348. The segment covering 360–371 has biased composition (basic and acidic residues); the sequence is QREEDHRREGLH. Residues 360–419 form a disordered region; the sequence is QREEDHRREGLHVGRASTPDWVSEGPQPGLRRALSSDSILSPAPDARAADPAPEVRKVNR. Position 377 is a phosphothreonine; by CDK1; in vitro (T377). S382 bears the Phosphoserine; by CDK1; in vitro mark. 3 positions are modified to phosphoserine; by PLK1; in vitro: S394, S395, and S397. S400 is subject to Phosphoserine. Residues 401 to 411 are compositionally biased toward low complexity; sequence PAPDARAADPA. S430 is modified (phosphoserine). The interval 447–494 is disordered; that stretch reads PSSLSTAEAKAATSPKATMSPRHLSESSGKPLSTKQEASKPPRGCPQA. S471 carries the post-translational modification Phosphoserine; by PLK1; in vitro. The span at 472–482 shows a compositional bias: polar residues; that stretch reads ESSGKPLSTKQ. 2 positions are modified to phosphoserine: S541 and S543. The stretch at 545-569 forms a coiled coil; it reads DLLERERESVLRREQEVAEERRNAL. A compositionally biased stretch (basic and acidic residues) spans 557–567; sequence REQEVAEERRN. 2 disordered regions span residues 557–598 and 622–643; these read REQE…ITGS and DPVD…GINP. S575 is modified (phosphoserine; by CDK1; in vitro). At T577 the chain carries Phosphothreonine. S582 and S586 each carry phosphoserine; by PLK1; in vitro. Residues 583-593 are compositionally biased toward low complexity; that stretch reads DQNSRSSSQAS. A Phosphoserine modification is found at S675.

This sequence belongs to the MISP family. Associates with F-actin. Interacts with DCTN1; this interaction regulates DCTN1 distribution at the cell cortex. Interacts with PTK2/FAK and MAPRE1. Phosphorylated by CDK1 and PLK1. CDK1 is the priming kinase for PLK1 phosphorylation. Phosphorylation by PLK1 is required for proper spindle orientation at metaphase.

It localises to the cell junction. Its subcellular location is the focal adhesion. The protein resides in the cytoplasm. It is found in the cytoskeleton. The protein localises to the cell cortex. Functionally, plays a role in mitotic spindle orientation and mitotic progression. Regulates the distribution of dynactin at the cell cortex in a PLK1-dependent manner, thus stabilizing cortical and astral microtubule attachments required for proper mitotic spindle positioning. May link microtubules to the actin cytospkeleton and focal adhesions. May be required for directed cell migration and centrosome orientation. May also be necessary for proper stacking of the Golgi apparatus. The protein is Mitotic interactor and substrate of PLK1 of Homo sapiens (Human).